We begin with the raw amino-acid sequence, 157 residues long: Protein-export protein SecB (157 aa).

This sequence belongs to the SecB family. In terms of assembly, homotetramer, a dimer of dimers. One homotetramer interacts with 1 SecA dimer.

It is found in the cytoplasm. Functionally, one of the proteins required for the normal export of preproteins out of the cell cytoplasm. It is a molecular chaperone that binds to a subset of precursor proteins, maintaining them in a translocation-competent state. It also specifically binds to its receptor SecA. This chain is Protein-export protein SecB, found in Alcanivorax borkumensis (strain ATCC 700651 / DSM 11573 / NCIMB 13689 / SK2).